A 325-amino-acid polypeptide reads, in one-letter code: Biotin synthase (325 aa).

One can recognise a Radical SAM core domain in the interval 36-254 (NEVQLAMLLS…IALARIMFPK (219 aa)). The [4Fe-4S] cluster site is built by C51, C55, and C58. Residues C95, C126, C186, and R258 each coordinate [2Fe-2S] cluster.

The protein belongs to the radical SAM superfamily. Biotin synthase family. As to quaternary structure, homodimer. It depends on [4Fe-4S] cluster as a cofactor. Requires [2Fe-2S] cluster as cofactor.

It carries out the reaction (4R,5S)-dethiobiotin + (sulfur carrier)-SH + 2 reduced [2Fe-2S]-[ferredoxin] + 2 S-adenosyl-L-methionine = (sulfur carrier)-H + biotin + 2 5'-deoxyadenosine + 2 L-methionine + 2 oxidized [2Fe-2S]-[ferredoxin]. It participates in cofactor biosynthesis; biotin biosynthesis; biotin from 7,8-diaminononanoate: step 2/2. Functionally, catalyzes the conversion of dethiobiotin (DTB) to biotin by the insertion of a sulfur atom into dethiobiotin via a radical-based mechanism. The protein is Biotin synthase of Neorickettsia sennetsu (strain ATCC VR-367 / Miyayama) (Ehrlichia sennetsu).